We begin with the raw amino-acid sequence, 522 residues long: Lysine--tRNA ligase (522 aa).

The short motif at proline 44–threonine 52 is the 'HIGH' region element. The 'KMSKS' region motif lies at lysine 290–serine 294. Position 293 (lysine 293) interacts with ATP.

It belongs to the class-I aminoacyl-tRNA synthetase family.

It localises to the cytoplasm. The enzyme catalyses tRNA(Lys) + L-lysine + ATP = L-lysyl-tRNA(Lys) + AMP + diphosphate. The chain is Lysine--tRNA ligase from Rickettsia bellii (strain RML369-C).